The chain runs to 267 residues: Putative carbamate hydrolase RutD (267 aa).

The AB hydrolase-1 domain maps to 23-139 (VVLLSSGLGG…IQRCFDTRIH (117 aa)).

The protein belongs to the AB hydrolase superfamily. Hydrolase RutD family.

The enzyme catalyses carbamate + 2 H(+) = NH4(+) + CO2. Functionally, involved in pyrimidine catabolism. May facilitate the hydrolysis of carbamate, a reaction that can also occur spontaneously. This Caulobacter segnis (strain ATCC 21756 / DSM 7131 / JCM 7823 / NBRC 15250 / LMG 17158 / TK0059) (Mycoplana segnis) protein is Putative carbamate hydrolase RutD.